The sequence spans 248 residues: tRNA1(Val) (adenine(37)-N6)-methyltransferase (248 aa).

Belongs to the methyltransferase superfamily. tRNA (adenine-N(6)-)-methyltransferase family.

Its subcellular location is the cytoplasm. The enzyme catalyses adenosine(37) in tRNA1(Val) + S-adenosyl-L-methionine = N(6)-methyladenosine(37) in tRNA1(Val) + S-adenosyl-L-homocysteine + H(+). Its function is as follows. Specifically methylates the adenine in position 37 of tRNA(1)(Val) (anticodon cmo5UAC). This Musicola paradisiaca (strain Ech703) (Dickeya paradisiaca) protein is tRNA1(Val) (adenine(37)-N6)-methyltransferase.